Reading from the N-terminus, the 677-residue chain is DNA-directed RNA polymerase subunit beta' (677 aa).

Zn(2+) contacts are provided by Cys69, Cys71, Cys87, and Cys90. 3 residues coordinate Mg(2+): Asp489, Asp491, and Asp493.

This sequence belongs to the RNA polymerase beta' chain family. RpoC1 subfamily. In terms of assembly, in plastids the minimal PEP RNA polymerase catalytic core is composed of four subunits: alpha, beta, beta', and beta''. When a (nuclear-encoded) sigma factor is associated with the core the holoenzyme is formed, which can initiate transcription. Requires Mg(2+) as cofactor. Zn(2+) is required as a cofactor.

It is found in the plastid. It localises to the chloroplast. The catalysed reaction is RNA(n) + a ribonucleoside 5'-triphosphate = RNA(n+1) + diphosphate. DNA-dependent RNA polymerase catalyzes the transcription of DNA into RNA using the four ribonucleoside triphosphates as substrates. The polypeptide is DNA-directed RNA polymerase subunit beta' (Spinacia oleracea (Spinach)).